A 348-amino-acid chain; its full sequence is Eukaryotic translation initiation factor 3 subunit F (348 aa).

An MPN domain is found at 30–166 (VVIQPQAIFS…TRTYISAPVG (137 aa)). The segment covering 312–327 (STAIGGTGAESGGQRG) has biased composition (gly residues). The segment at 312-348 (STAIGGTGAESGGQRGGQRNNRQRGGQQRNQAEELRA) is disordered. A compositionally biased stretch (low complexity) spans 328–341 (GQRNNRQRGGQQRN).

This sequence belongs to the eIF-3 subunit F family. Component of the eukaryotic translation initiation factor 3 (eIF-3) complex.

The protein localises to the cytoplasm. Functionally, component of the eukaryotic translation initiation factor 3 (eIF-3) complex, which is involved in protein synthesis of a specialized repertoire of mRNAs and, together with other initiation factors, stimulates binding of mRNA and methionyl-tRNAi to the 40S ribosome. The eIF-3 complex specifically targets and initiates translation of a subset of mRNAs involved in cell proliferation. The sequence is that of Eukaryotic translation initiation factor 3 subunit F from Coccidioides immitis (strain RS) (Valley fever fungus).